A 247-amino-acid polypeptide reads, in one-letter code: UPF0612 protein P20C8.01c (247 aa).

2 coiled-coil regions span residues 27–63 and 138–225; these read IKRY…MKYE and DTVQ…DARS.

It belongs to the UPF0612 family.

Its subcellular location is the cytoplasm. This is UPF0612 protein P20C8.01c from Schizosaccharomyces pombe (strain 972 / ATCC 24843) (Fission yeast).